The primary structure comprises 439 residues: MSKLYLMSLGCNKNLVDSEIMLGRLSAYELCDEPSKADVIIVNTCGFIDSAKKESINAILDLHEQRKKDSLLVVTGCLMQRYREELMKELPEVDLFTGVGDYERVDEMILKKTNLFSNSTYLQSENSKRIITGSNSHAFIKIAEGCNQKCSFCAIPSFKGKLKSREISSIIAELKDLVARGYKDFSFIAQDTSSYLFDKGEKDGLIRLIDEVEKIKGIRAARILYLYPTSASEALIKRIIASEIFVNYFDMPLQHISDNMLKIMKRGANSTRLKEMLNLMKSAPNSFLRTGFIVGHPGESEADFEELCEFVKDFGFDRVSVFAYSKEEDTAAFDMEQVSFKVINKRLKIIEKIVNEVIEKSFEKEVGQKRLVVCTGESSEGEFFIAAKDLRWDREIDGEILINESECGNLEMGQIYECEILQNLDKKLLAKALRKVDAN.

An MTTase N-terminal domain is found at 2–114; the sequence is SKLYLMSLGC…VDEMILKKTN (113 aa). Positions 11, 45, 77, 146, 150, and 153 each coordinate [4Fe-4S] cluster. Residues 132 to 363 enclose the Radical SAM core domain; sequence TGSNSHAFIK…VNEVIEKSFE (232 aa).

This sequence belongs to the methylthiotransferase family. RimO subfamily. The cofactor is [4Fe-4S] cluster.

It is found in the cytoplasm. It catalyses the reaction L-aspartate(89)-[ribosomal protein uS12]-hydrogen + (sulfur carrier)-SH + AH2 + 2 S-adenosyl-L-methionine = 3-methylsulfanyl-L-aspartate(89)-[ribosomal protein uS12]-hydrogen + (sulfur carrier)-H + 5'-deoxyadenosine + L-methionine + A + S-adenosyl-L-homocysteine + 2 H(+). In terms of biological role, catalyzes the methylthiolation of an aspartic acid residue of ribosomal protein uS12. The chain is Ribosomal protein uS12 methylthiotransferase RimO from Campylobacter jejuni (strain RM1221).